Consider the following 126-residue polypeptide: MHELSYATSVLNAILDAVKQQEELGRKVIKVNDINLEIGDLTLISLDQLQFVFEVISEDTICKGAELKAEMVKPKIFCNDCEFEGNLDTKDELEVVCPKCESRNIKLKGGKEFNIVNATIEFDDEE.

H2 provides a ligand contact to Ni(2+). The Zn(2+) site is built by C78, C81, C97, and C100.

This sequence belongs to the HypA/HybF family.

In terms of biological role, involved in the maturation of [NiFe] hydrogenases. Required for nickel insertion into the metal center of the hydrogenase. The protein is Hydrogenase maturation factor HypA of Methanococcus maripaludis (strain DSM 14266 / JCM 13030 / NBRC 101832 / S2 / LL).